We begin with the raw amino-acid sequence, 80 residues long: UPF0291 protein LCA_1274 (80 aa).

The disordered stretch occupies residues 59–80; that stretch reads EGKEVTPEKVKDIQREKGLRDD.

The protein belongs to the UPF0291 family.

It localises to the cytoplasm. In Latilactobacillus sakei subsp. sakei (strain 23K) (Lactobacillus sakei subsp. sakei), this protein is UPF0291 protein LCA_1274.